We begin with the raw amino-acid sequence, 462 residues long: Chitinase 1 (462 aa).

Residues 1-17 (MILNLIILLAISIVASA) form the signal peptide. The region spanning 18 to 291 (SNIAAYWGQN…NQLYQALSGS (274 aa)) is the GH18 domain. N-linked (GlcNAc...) asparagine glycosylation is present at asparagine 57. The active-site Proton donor is glutamate 147.

Belongs to the glycosyl hydrolase 18 family. Chitinase class III subfamily.

Its subcellular location is the secreted. It catalyses the reaction Random endo-hydrolysis of N-acetyl-beta-D-glucosaminide (1-&gt;4)-beta-linkages in chitin and chitodextrins.. This is Chitinase 1 (CHT1) from Candida albicans (Yeast).